Reading from the N-terminus, the 307-residue chain is G-protein coupled receptor 35 (307 aa).

Topologically, residues 1–18 are extracellular; sequence MNSTTCNSTLTWPASVNN. N-linked (GlcNAc...) asparagine glycans are attached at residues N2 and N7. The helical transmembrane segment at 19–39 threads the bilayer; it reads FFIIYSALLLVLGLLLNSVAL. Residues 40–53 are Cytoplasmic-facing; sequence WVFCYRMHQWTETR. A helical transmembrane segment spans residues 54–74; sequence IYMTNLAVADLCLLCSLPFVL. Residues 75–88 are Extracellular-facing; the sequence is YSLKYSSSDTPVCQ. C87 and C160 are disulfide-bonded. The chain crosses the membrane as a helical span at residues 89–110; it reads LSQGIYLANRYMSISLVTAIAV. At 111–129 the chain is on the cytoplasmic side; it reads DRYVAVRHPLRARELRSPR. The helical transmembrane segment at 130–150 threads the bilayer; that stretch reads QAAAVCVALWVIVVTSLVVRW. Over 151–176 the chain is Extracellular; sequence RLGMQEGGFCFSSQTRRNFSTTAFSL. Residues 177 to 197 form a helical membrane-spanning segment; the sequence is LGFYLPLAIVVFCSLQVVTVL. Residues 198–217 lie on the Cytoplasmic side of the membrane; sequence SRRPAADVGQAEATQKATHM. A helical transmembrane segment spans residues 218-238; sequence VWANLAVFVICFLPLHVVLTV. At 239–257 the chain is on the extracellular side; the sequence is QVSLNLNTCAARDTFSRAL. A helical membrane pass occupies residues 258 to 278; it reads SITGKLSDTNCCLDAICYYYM. Residues 279-307 are Cytoplasmic-facing; that stretch reads AREFQEASKPATSSNTPHKSQDSQILSLT. Residues S286, S292, S298, and S301 each carry the phosphoserine modification. A disordered region spans residues 288–307; the sequence is PATSSNTPHKSQDSQILSLT.

The protein belongs to the G-protein coupled receptor 1 family. In terms of processing, multiply phosphorylated in clusters of serines and threonines in the C-terminal tail. Phosphorylation of Ser-298 and Ser-301 is mediated by GRK5 and/or GRK6. In terms of tissue distribution, predominantly expressed in immune and gastrointestinal tissues. Strongly GPR35 expressed in colonic macrophages.

It localises to the cell membrane. G-protein coupled receptor that binds to several ligands including the tryptophan metabolite kynurenic acid (KYNA), lysophosphatidic acid (LPA) or 5-hydroxyindoleacetic acid (5-HIAA) with high affinity, leading to rapid and transient activation of numerous intracellular signaling pathways. Plays a role in neutrophil recruitment to sites of inflammation and bacterial clearance through the major serotonin metabolite 5-HIAA that acts as a physiological ligand. Stimulates lipid metabolism, thermogenic, and anti-inflammatory gene expression in adipose tissue once activated by kynurenic acid. In macrophages, activation by lysophosphatidic acid promotes GPR35-induced signaling with a distinct transcriptional profile characterized by TNF production associated with ERK and NF-kappa-B activation. In turn, induces chemotaxis of macrophages. The sequence is that of G-protein coupled receptor 35 (Gpr35) from Mus musculus (Mouse).